A 248-amino-acid polypeptide reads, in one-letter code: Deoxyribose-phosphate aldolase (248 aa).

Asp-106 serves as the catalytic Proton donor/acceptor. Lys-168 functions as the Schiff-base intermediate with acetaldehyde in the catalytic mechanism. The active-site Proton donor/acceptor is the Lys-197.

The protein belongs to the DeoC/FbaB aldolase family. DeoC type 1 subfamily.

Its subcellular location is the cytoplasm. It carries out the reaction 2-deoxy-D-ribose 5-phosphate = D-glyceraldehyde 3-phosphate + acetaldehyde. Its pathway is carbohydrate degradation; 2-deoxy-D-ribose 1-phosphate degradation; D-glyceraldehyde 3-phosphate and acetaldehyde from 2-deoxy-alpha-D-ribose 1-phosphate: step 2/2. In terms of biological role, catalyzes a reversible aldol reaction between acetaldehyde and D-glyceraldehyde 3-phosphate to generate 2-deoxy-D-ribose 5-phosphate. This is Deoxyribose-phosphate aldolase from Rhizobium meliloti (strain 1021) (Ensifer meliloti).